The sequence spans 179 residues: UPF0302 protein BLi02393/BL02764 (179 aa).

Belongs to the UPF0302 family.

The sequence is that of UPF0302 protein BLi02393/BL02764 from Bacillus licheniformis (strain ATCC 14580 / DSM 13 / JCM 2505 / CCUG 7422 / NBRC 12200 / NCIMB 9375 / NCTC 10341 / NRRL NRS-1264 / Gibson 46).